A 269-amino-acid chain; its full sequence is Hydroxyethylthiazole kinase (269 aa).

M43 is a substrate binding site. ATP contacts are provided by R119 and S165. Position 192 (A192) interacts with substrate.

It belongs to the Thz kinase family. Mg(2+) is required as a cofactor.

The enzyme catalyses 5-(2-hydroxyethyl)-4-methylthiazole + ATP = 4-methyl-5-(2-phosphooxyethyl)-thiazole + ADP + H(+). Its pathway is cofactor biosynthesis; thiamine diphosphate biosynthesis; 4-methyl-5-(2-phosphoethyl)-thiazole from 5-(2-hydroxyethyl)-4-methylthiazole: step 1/1. Its function is as follows. Catalyzes the phosphorylation of the hydroxyl group of 4-methyl-5-beta-hydroxyethylthiazole (THZ). In Glaesserella parasuis serovar 5 (strain SH0165) (Haemophilus parasuis), this protein is Hydroxyethylthiazole kinase.